We begin with the raw amino-acid sequence, 133 residues long: Transcription antitermination protein NusB (133 aa).

Belongs to the NusB family.

Functionally, involved in transcription antitermination. Required for transcription of ribosomal RNA (rRNA) genes. Binds specifically to the boxA antiterminator sequence of the ribosomal RNA (rrn) operons. This chain is Transcription antitermination protein NusB, found in Shewanella denitrificans (strain OS217 / ATCC BAA-1090 / DSM 15013).